The chain runs to 329 residues: U5 small nuclear ribonucleoprotein TSSC4 (329 aa).

Disordered regions lie at residues 1 to 88 and 104 to 156; these read MAEA…MSST and ARRA…PDYV. The segment covering 22–41 has biased composition (low complexity); the sequence is DTLPSDTVSLSDSDSDLSLP. 6 positions are modified to phosphoserine: Ser60, Ser67, Ser86, Ser132, Ser143, and Ser146. Residues 77 to 104 are hom2; mediates interaction with the U5 snRNP complexes and required for spliceosomal tri-snRNP complex assembly; it reads VQPFHLRGMSSTFSQRSRDIFDCLEGAA. Residues 149-316 form an interaction with SNRNP200 region; sequence VPPVPDYVAH…SRKRSRDHFR (168 aa). A hom3; mediates interaction with the U5 snRNP complexes region spans residues 150–186; sequence PPVPDYVAHPERWTKYSLEDVTEVSEQSNQATALAFL. The interval 201-250 is hom4; necessary for interaction with the PRPF19 complex and required for spliceosomal tri-snRNP complex assembly; the sequence is FNQDPSSCGEGRVIFTKPVRGVEARHERKRVLGKVGEPGRGGLGNPATDR. Lys217 is subject to N6-acetyllysine. The tract at residues 221 to 329 is disordered; the sequence is GVEARHERKR…SSPEDPGAEV (109 aa). Ser265 bears the Phosphoserine mark. Over residues 306-317 the composition is skewed to basic residues; that stretch reads GSRKRSRDHFRN. The residue at position 321 (Ser321) is a Phosphoserine.

It belongs to the TSSC4 family. In terms of assembly, interacts in a RNA-independent manner with distinct U5 snRNP-containing complexes, the mono-U5 snRNP and the post-splicing U5 snRNP-PRPF19 complex. Interacts with SNRNP200; the interaction is direct, excludes recruitment of C9ORF78 and WBP4 to SNRNP200 and negatively regulates its RNA helicase activity. Interacts with PRPF8; the interaction is direct. Expressed in fetal brain, lung, liver and kidney. Widely expressed in adult tissues.

It localises to the nucleus. The protein resides in the cytoplasm. Functionally, protein associated with the U5 snRNP, during its maturation and its post-splicing recycling and which is required for spliceosomal tri-snRNP complex assembly in the nucleus. Has a molecular sequestering activity and transiently hinders SNRNP200 binding sites for constitutive splicing factors that intervene later during the assembly of the spliceosome and splicing. Together with its molecular sequestering activity, may also function as a molecular adapter and placeholder, coordinating the assembly of the U5 snRNP and its association with the U4/U6 di-snRNP. In Homo sapiens (Human), this protein is U5 small nuclear ribonucleoprotein TSSC4.